A 146-amino-acid polypeptide reads, in one-letter code: MQHTRRMLNPLLTGLRNLPARGATTTTAAAPAKVEKTVNTVTILGRVGADPQLRGSQEHPVVTFSVATHTNYKYENGDWAQRTDWHRVVVFKPNLRDTVLEYLKKGQRTMVQGKITYGEITDQQGNQKTSTSIIADDVLFFRDANN.

Residues 1-22 (MQHTRRMLNPLLTGLRNLPARG) constitute a mitochondrion transit peptide. An SSB domain is found at 38–142 (VNTVTILGRV…IIADDVLFFR (105 aa)).

Homotetramer. As to expression, uniformly distributed in the early embryo. High levels detected in the anterior and posterior midgut primordia of stage 12 embryos. In larvae, high levels were detected in proliferating tissues including the CNS and digestive tract. In adults, highly expressed in the CNS, digestive tract and ovary.

The protein resides in the mitochondrion. Binds preferentially and cooperatively to pyrimidine rich single-stranded DNA (ss-DNA). Required to maintain the copy number of mitochondrial DNA (mtDNA) and plays crucial roles during mtDNA replication that stimulate activity of the gamma complex polymerase PolG1/tam at the replication fork. Promotes PolG1 activity largely by organizing the template DNA and eliminating secondary structures to favor ss-DNA conformations that facilitate PolG1 activity. This Drosophila melanogaster (Fruit fly) protein is Single-stranded DNA-binding protein, mitochondrial (mtSSB).